A 391-amino-acid polypeptide reads, in one-letter code: METIKSVDIYELGSPGEKSSPWSSTILIVKLTSSNGNIGYGEAPTTFMTLPVKESMREVERVFKDQNYFNIEKNMREFYKHSFYLSRSMEATSALSAFEIASWDLIGKDLGTPVYNLLGGEYNSELRAYANGWYSDCLEPDDFVSRAKEYIKKGYTAFKFDPFRNNFDRIGNDGIKKAVDIVSAMRSELGENIDLLIECHGRFSTKYAIKVGQALDEFNPLFIEEPIHPEMELGLFDFKRYVNTPVALGERLLNKEDFARYISQGMVDIVQADLTNSKGILEAKKISAIVESFGGLMAFHNAFGPVQTAATLNVDYTLTNFLIQESFEDSWPDWKRNLFSGYRIENGHFKLSGKPGLGITADEKLMEKLIYDGMEEFNKNEPSWVVSGTYK.

Glu-198 is a Mg(2+) binding site. The Proton donor role is filled by His-200. 2 residues coordinate Mg(2+): Glu-224 and Glu-250. The active-site Proton acceptor is the His-300.

This sequence belongs to the mandelate racemase/muconate lactonizing enzyme family. GaD subfamily. As to quaternary structure, homooctamer. Mg(2+) serves as cofactor.

The catalysed reaction is D-gluconate = 2-dehydro-3-deoxy-D-gluconate + H2O. The enzyme catalyses D-galactonate = 2-dehydro-3-deoxy-D-galactonate + H2O. The protein operates within carbohydrate acid metabolism; D-gluconate degradation. In terms of biological role, involved in the degradation of glucose and galactose via the nonphosphorylative variant of Entner-Doudoroff pathway. Catalyzes the dehydration of gluconate to produce 2-keto-3-deoxygluconate (KDG). It is also able to catalyze the dehydration of galactonate to produce 2-keto-3-deoxygalactonate (KDGal). The chain is D-gluconate/D-galactonate dehydratase from Picrophilus torridus (strain ATCC 700027 / DSM 9790 / JCM 10055 / NBRC 100828 / KAW 2/3).